The primary structure comprises 190 residues: RNA pyrophosphohydrolase (190 aa).

The Nudix hydrolase domain occupies 6-149; it reads GYRPNVGIIL…KRDVYTQALN (144 aa). A Nudix box motif is present at residues 38 to 59; the sequence is GGIKYGESPVQAMYRELHEEVG. Residues 167 to 190 are disordered; sequence QRVHGPRSTDNPSSETDGHAHIAG.

This sequence belongs to the Nudix hydrolase family. RppH subfamily. A divalent metal cation serves as cofactor.

Accelerates the degradation of transcripts by removing pyrophosphate from the 5'-end of triphosphorylated RNA, leading to a more labile monophosphorylated state that can stimulate subsequent ribonuclease cleavage. This Bordetella parapertussis (strain 12822 / ATCC BAA-587 / NCTC 13253) protein is RNA pyrophosphohydrolase.